We begin with the raw amino-acid sequence, 481 residues long: Proline--tRNA ligase (481 aa).

This sequence belongs to the class-II aminoacyl-tRNA synthetase family. ProS type 3 subfamily. Homodimer.

It localises to the cytoplasm. It carries out the reaction tRNA(Pro) + L-proline + ATP = L-prolyl-tRNA(Pro) + AMP + diphosphate. Functionally, catalyzes the attachment of proline to tRNA(Pro) in a two-step reaction: proline is first activated by ATP to form Pro-AMP and then transferred to the acceptor end of tRNA(Pro). The protein is Proline--tRNA ligase of Pelodictyon phaeoclathratiforme (strain DSM 5477 / BU-1).